A 64-amino-acid polypeptide reads, in one-letter code: Prokaryotic ubiquitin-like protein Pup (64 aa).

Positions 1–38 (MAQEQTKRGGGGGEDDDPTGSTAAGQERREKLTEETDD) are disordered. The tract at residues 21–58 (STAAGQERREKLTEETDDLLDEIDDVLEENAEDFVRAY) is ARC ATPase binding. A coiled-coil region spans residues 23 to 52 (AAGQERREKLTEETDDLLDEIDDVLEENAE). Gln64 is subject to Deamidated glutamine. An Isoglutamyl lysine isopeptide (Gln-Lys) (interchain with K-? in acceptor proteins) cross-link involves residue Gln64.

Belongs to the prokaryotic ubiquitin-like protein family. Strongly interacts with the proteasome-associated ATPase ARC through a hydrophobic interface; the interacting region of Pup lies in its C-terminal half. There is one Pup binding site per ARC hexamer ring. Is modified by deamidation of its C-terminal glutamine to glutamate by the deamidase Dop, a prerequisite to the subsequent pupylation process.

It functions in the pathway protein degradation; proteasomal Pup-dependent pathway. In terms of biological role, protein modifier that is covalently attached to lysine residues of substrate proteins, thereby targeting them for proteasomal degradation. The tagging system is termed pupylation. The sequence is that of Prokaryotic ubiquitin-like protein Pup from Mycolicibacterium gilvum (strain PYR-GCK) (Mycobacterium gilvum (strain PYR-GCK)).